Reading from the N-terminus, the 172-residue chain is Myosin regulatory light polypeptide 9 (172 aa).

Residues 1–16 (MSSKRAKAKTTKKRPQ) are compositionally biased toward basic residues. The disordered stretch occupies residues 1–20 (MSSKRAKAKTTKKRPQRATS). At Ser-2 the chain carries N-acetylserine. Thr-19 carries the phosphothreonine; by MLCK, CIT and ROCK2 modification. At Ser-20 the chain carries Phosphoserine; by CDC42BP, CIT, MLCK, PAK1, ROCK1, ROCK2, DAPK1, DAPK2 and ZIPK/DAPK3. 3 EF-hand domains span residues 29-64 (SQIQEFKEAFNMIDQNRDGFIDKEDLHDMLASLGKN), 98-133 (DPEDVIRNAFACFDEEASGFIHEDHLRELLTTMGDR), and 134-169 (FTDEEVDEMYREAPIDKKGNFNYVEFTRILKHGAKD). The Ca(2+) site is built by Asp-42, Asn-44, Asp-46, and Asp-53.

As to quaternary structure, myosin is a hexamer of 2 heavy chains and 4 light chains: interacts with myosin heavy chain MYO19. Interacts with LUZP1; the interaction results in inhibition of phosphorylation of MYL9 by DAPK3. Phosphorylation increases the actin-activated myosin ATPase activity and thereby regulates the contractile activity. It is required to generate the driving force in the migration of the cells but not necessary for localization of myosin-2 at the leading edge. Phosphorylation is required for myotube formation. Phosphorylated by DAPK3; DAPK3-mediated phosphorylation is inhibited by LUZP1. In terms of tissue distribution, smooth muscle tissues and in some, but not all, nonmuscle cells.

The protein localises to the cytoplasm. Its subcellular location is the cytoskeleton. It localises to the cell cortex. Functionally, myosin regulatory subunit that plays an important role in regulation of both smooth muscle and nonmuscle cell contractile activity via its phosphorylation. Implicated in cytokinesis, receptor capping, and cell locomotion. In myoblasts, may regulate PIEZO1-dependent cortical actomyosin assembly involved in myotube formation. This is Myosin regulatory light polypeptide 9 (MYL9) from Homo sapiens (Human).